We begin with the raw amino-acid sequence, 150 residues long: Small ribosomal subunit protein eS19 (150 aa).

The protein belongs to the eukaryotic ribosomal protein eS19 family. Part of the 30S ribosomal subunit.

In terms of biological role, may be involved in maturation of the 30S ribosomal subunit. The sequence is that of Small ribosomal subunit protein eS19 (rps19e) from Pyrococcus abyssi (strain GE5 / Orsay).